The primary structure comprises 168 residues: 3-isopropylmalate dehydratase small subunit (168 aa).

Belongs to the LeuD family. LeuD type 2 subfamily. In terms of assembly, heterodimer of LeuC and LeuD.

It catalyses the reaction (2R,3S)-3-isopropylmalate = (2S)-2-isopropylmalate. Its pathway is amino-acid biosynthesis; L-leucine biosynthesis; L-leucine from 3-methyl-2-oxobutanoate: step 2/4. Its function is as follows. Catalyzes the isomerization between 2-isopropylmalate and 3-isopropylmalate, via the formation of 2-isopropylmaleate. The protein is 3-isopropylmalate dehydratase small subunit of Thermodesulfovibrio yellowstonii (strain ATCC 51303 / DSM 11347 / YP87).